A 237-amino-acid polypeptide reads, in one-letter code: Cyclic-di-GMP-binding biofilm dispersal mediator protein (237 aa).

10 to 34 (LILGGSRGIGAAIVRRFVTDGANVR) contributes to the NAD(+) binding site. Ser132 is a substrate binding site. Tyr146 (proton acceptor) is an active-site residue.

The protein belongs to the short-chain dehydrogenases/reductases (SDR) family.

Functionally, increases biofilm dispersal. Acts by binding directly to the signaling molecule cyclic-di-GMP, which decreases the intracellular concentration of cyclic-di-GMP and leads to biofilm dispersal. Also controls other biofilm-related phenotypes such as cell motility, cell size, cell aggregation and production of extracellular DNA and extracellular polysaccharides (EPS). Does not act as a phosphodiesterase. This is Cyclic-di-GMP-binding biofilm dispersal mediator protein (bdcA) from Escherichia coli (strain K12).